The chain runs to 84 residues: RNA-binding protein SAHV_0542 (84 aa).

This sequence belongs to the eukaryotic ribosomal protein eL8 family.

This chain is RNA-binding protein SAHV_0542, found in Staphylococcus aureus (strain Mu3 / ATCC 700698).